The primary structure comprises 512 residues: Glycerol kinase, glycosomal (512 aa).

Thr-11 contacts substrate. Arg-15 is an ATP binding site. Arg-84, Tyr-139, and Asp-254 together coordinate substrate. Residues Thr-276, Gly-321, and 422–426 each bind ATP; that span reads GLSKN. Positions 510 to 512 match the Microbody targeting signal motif; the sequence is AKL.

It belongs to the FGGY kinase family.

The protein localises to the glycosome. The catalysed reaction is glycerol + ATP = sn-glycerol 3-phosphate + ADP + H(+). It functions in the pathway polyol metabolism; glycerol degradation via glycerol kinase pathway; sn-glycerol 3-phosphate from glycerol: step 1/1. Catalyzes the phosphorylation of glycerol using ATP. Under anoxic conditions, when glycerol 3-phosphate accumulates in the glycosome, it catalyzes the reverse reaction, maintaining the ATP balance. Key enzyme for the survival of bloodstream forms under anoxic conditions. The sequence is that of Glycerol kinase, glycosomal (GK) from Trypanosoma brucei brucei.